Consider the following 524-residue polypeptide: 2-isopropylmalate synthase (524 aa).

The Pyruvate carboxyltransferase domain occupies 15-275; that stretch reads VVVFDTTMRD…PYGTSVDPVH (261 aa). Mn(2+)-binding residues include Asp-24, His-212, His-214, and Asn-248. The tract at residues 401-524 is regulatory domain; the sequence is RVSRLRVVAG…RPEAAIASGF (124 aa).

It belongs to the alpha-IPM synthase/homocitrate synthase family. LeuA type 1 subfamily. As to quaternary structure, homodimer. Mn(2+) is required as a cofactor.

Its subcellular location is the cytoplasm. It carries out the reaction 3-methyl-2-oxobutanoate + acetyl-CoA + H2O = (2S)-2-isopropylmalate + CoA + H(+). The protein operates within amino-acid biosynthesis; L-leucine biosynthesis; L-leucine from 3-methyl-2-oxobutanoate: step 1/4. Catalyzes the condensation of the acetyl group of acetyl-CoA with 3-methyl-2-oxobutanoate (2-ketoisovalerate) to form 3-carboxy-3-hydroxy-4-methylpentanoate (2-isopropylmalate). The sequence is that of 2-isopropylmalate synthase from Caulobacter vibrioides (strain ATCC 19089 / CIP 103742 / CB 15) (Caulobacter crescentus).